We begin with the raw amino-acid sequence, 88 residues long: Small ribosomal subunit protein bS20 (88 aa).

The tract at residues 1–23 is disordered; the sequence is MANSPQAKKRARQNDKARAHNAS.

This sequence belongs to the bacterial ribosomal protein bS20 family.

Functionally, binds directly to 16S ribosomal RNA. The protein is Small ribosomal subunit protein bS20 of Saccharophagus degradans (strain 2-40 / ATCC 43961 / DSM 17024).